Consider the following 598-residue polypeptide: Vanadium-dependent bromoperoxidase (598 aa).

Positions 361, 363, 365, 368, and 370 each coordinate Ca(2+). Lys400 and Arg408 together coordinate vanadate. Residue His480 is part of the active site. The vanadate site is built by Ser485, Gly486, His487, Arg547, and His553. His487 is an active-site residue.

This sequence belongs to the vanadium-dependent haloperoxidase family. Homododecamer. Ca(2+) serves as cofactor. The cofactor is vanadate.

The catalysed reaction is RH + Br(-) + H2O2 = RBr + 2 H2O.. In terms of biological role, catalyzes the halogenation of organic substrates in the presence of hydrogen peroxide. In Corallina officinalis (Coral seaweed), this protein is Vanadium-dependent bromoperoxidase.